The following is a 174-amino-acid chain: CASP-like protein 4D2 (174 aa).

At 1–14 (MAPPPPSPPPVSLK) the chain is on the cytoplasmic side. A helical transmembrane segment spans residues 15–35 (VSLLLLRVLTGVFLVIALIIL). Over 36–60 (STNSVTIVSQGSALKFHFKDVYAYR) the chain is Extracellular. Residues 61–81 (YMLSAAVIGLLYAVIQLFFTI) form a helical membrane-spanning segment. Residues 82 to 150 (SEFATGMKNP…FFSRGYASAS (69 aa)) lie on the Cytoplasmic side of the membrane. A helical transmembrane segment spans residues 151–171 (LLLFSFICLAVLSVFSSLAIA). Residues 172–174 (KRN) are Extracellular-facing.

The protein belongs to the Casparian strip membrane proteins (CASP) family. Homodimer and heterodimers.

It is found in the cell membrane. This chain is CASP-like protein 4D2, found in Arabidopsis lyrata subsp. lyrata (Lyre-leaved rock-cress).